A 389-amino-acid polypeptide reads, in one-letter code: Chalcone synthase 2 (389 aa).

Residue C164 is part of the active site.

The protein belongs to the thiolase-like superfamily. Chalcone/stilbene synthases family.

The enzyme catalyses (E)-4-coumaroyl-CoA + 3 malonyl-CoA + 3 H(+) = 2',4,4',6'-tetrahydroxychalcone + 3 CO2 + 4 CoA. The protein operates within secondary metabolite biosynthesis; flavonoid biosynthesis. In terms of biological role, the primary product of this enzyme is 4,2',4',6'-tetrahydroxychalcone (also termed naringenin-chalcone or chalcone) which can under specific conditions spontaneously isomerize into naringenin. In Solanum lycopersicum (Tomato), this protein is Chalcone synthase 2 (CHS2).